The following is a 398-amino-acid chain: Arylacetamide deacetylase (398 aa).

Topologically, residues 1–5 (MGRTI) are cytoplasmic. Residues 6-26 (FLLISVVLVAYYIYIPLPDDI) form a helical; Signal-anchor for type II membrane protein membrane-spanning segment. Over 27-398 (EEPWKIILGN…QYLNWLHKNL (372 aa)) the chain is Lumenal. Asn77 carries an N-linked (GlcNAc...) asparagine glycan. Residues 110–112 (HGG) carry the Involved in the stabilization of the negatively charged intermediate by the formation of the oxyanion hole motif. A disulfide bridge connects residues Cys115 and Cys339. Ser188 is a catalytic residue. N-linked (GlcNAc...) asparagine glycosylation is found at Asn192, Asn281, and Asn324. Active-site residues include Asp342 and His372.

Belongs to the 'GDXG' lipolytic enzyme family. In terms of tissue distribution, highest levels in liver with lower levels in jejunum, kidney and testis.

It localises to the endoplasmic reticulum membrane. Its subcellular location is the microsome membrane. It carries out the reaction a triacylglycerol + H2O = a diacylglycerol + a fatty acid + H(+). Its function is as follows. Displays cellular triglyceride lipase activity in liver, increases the levels of intracellular fatty acids derived from the hydrolysis of newly formed triglyceride stores and plays a role in very low-density lipoprotein assembly. Displays serine esterase activity in liver. Deacetylates a variety of arylacetamide substrates, including xenobiotic compounds and procarcinogens, converting them to the primary arylamide compounds and increasing their toxicity. This Rattus norvegicus (Rat) protein is Arylacetamide deacetylase (Aadac).